The chain runs to 1082 residues: RhoGEF domain-containing protein gxcI (1082 aa).

The span at 1 to 15 shows a compositional bias: polar residues; that stretch reads MRKNSTSNPSPSHQF. Disordered regions lie at residues 1 to 29, 59 to 78, 91 to 394, 438 to 488, and 504 to 524; these read MRKNSTSNPSPSHQFLTPPKNTTTVVNNN, DKNQQQQQQQQQQTHQVLPQ, YNEQ…VTSL, KQAS…SVSN, and INSFNSDDSNNSNNSNSSLSL. Low complexity-rich tracts occupy residues 20 to 29, 62 to 71, 96 to 109, 116 to 160, and 170 to 184; these read KNTTTVVNNN, QQQQQQQQQQ, PSSSSSTASSSSSP, LLST…SGSP, and PTILSPLPSPRRQLP. A compositionally biased stretch (pro residues) spans 185–206; the sequence is TRPPSPLPKLPSRPTSPVPPNP. The segment covering 211-244 has biased composition (low complexity); that stretch reads NTTTTNNNNNNNNNNNNNNNNNNNNNNNNNNNNN. Over residues 262 to 276 the composition is skewed to pro residues; that stretch reads PIPPPNDKPAPPPRP. Over residues 282–366 the composition is skewed to low complexity; the sequence is TLTTPPTIAT…NNNNNSNNNK (85 aa). Pro residues predominate over residues 367 to 379; it reads PLPPTSTKPPRPK. Positions 450–473 are enriched in low complexity; sequence SSLSLSTTPTSVSPSTPSSANPTP. The DH domain maps to 622-817; sequence SFNKVIKEII…EKIVNDINGK (196 aa). The interval 838 to 994 is PH-like; it reads QQLRDQTFLK…NDIDEAINIL (157 aa). Disordered regions lie at residues 920–961 and 1017–1060; these read NNNN…NSTP and NNNN…NSNN.

Functionally, GTPase-activating protein. The sequence is that of RhoGEF domain-containing protein gxcI (gxcI) from Dictyostelium discoideum (Social amoeba).